The chain runs to 472 residues: Collagenase 3 (472 aa).

The N-terminal stretch at 1-19 (MHPGVLAAFLFLSWTRCWS) is a signal peptide. A propeptide spans 20 to 104 (LPVPNDDDDD…PRCGVPDVGE (85 aa)) (activation peptide). Positions 95–102 (PRCGVPDV) match the Cysteine switch motif. C97 is a Zn(2+) binding site. N-linked (GlcNAc...) asparagine glycosylation is present at N118. Ca(2+) is bound at residue D129. N-linked (GlcNAc...) asparagine glycans are attached at residues N153 and N159. Ca(2+) is bound at residue D163. H173 and D175 together coordinate Zn(2+). The interaction with TIMP2 stretch occupies residues 177-247 (YPFDGPSGLL…GALMFPIYTY (71 aa)). 4 residues coordinate Ca(2+): D180, G181, S183, and L185. Position 188 (H188) interacts with Zn(2+). 3 residues coordinate Ca(2+): N195, G197, and D199. Residue H201 coordinates Zn(2+). Ca(2+)-binding residues include D203, D204, and E206. H223 contributes to the Zn(2+) binding site. E224 is a catalytic residue. Zn(2+) contacts are provided by H227, H233, and M241. Residues 269–472 (PGDEDPNPKH…VMPTNSLLWC (204 aa)) form an interaction with collagen region. Hemopexin repeat units lie at residues 282-331 (PDKC…WPEL), 332-378 (PNRI…GFPK), 380-428 (VKKI…FPGI), and 429-472 (GDKV…LLWC). An intrachain disulfide couples C285 to C472. Residues D292, I294, D336, and A338 each coordinate Ca(2+). Phosphotyrosine; by PKDCC is present on Y367. Residues S384, A386, D433, and V435 each coordinate Ca(2+).

The protein belongs to the peptidase M10A family. Requires Ca(2+) as cofactor. Zn(2+) is required as a cofactor. In terms of processing, the proenzyme is activated by removal of the propeptide; this cleavage can be effected by other matrix metalloproteinases, such as MMP2, MMP3 and MMP14 and may involve several cleavage steps. Cleavage can also be autocatalytic, after partial maturation by another protease or after treatment with 4-aminophenylmercuric acetate (APMA) (in vitro). N-glycosylated. Post-translationally, tyrosine phosphorylated by PKDCC/VLK. As to expression, seems to be specific to breast carcinomas.

Its subcellular location is the secreted. It is found in the extracellular space. The protein resides in the extracellular matrix. In terms of biological role, plays a role in the degradation of extracellular matrix proteins including fibrillar collagen, fibronectin, TNC and ACAN. Cleaves triple helical collagens, including type I, type II and type III collagen, but has the highest activity with soluble type II collagen. Can also degrade collagen type IV, type XIV and type X. May also function by activating or degrading key regulatory proteins, such as TGFB1 and CCN2. Plays a role in wound healing, tissue remodeling, cartilage degradation, bone development, bone mineralization and ossification. Required for normal embryonic bone development and ossification. Plays a role in the healing of bone fractures via endochondral ossification. Plays a role in wound healing, probably by a mechanism that involves proteolytic activation of TGFB1 and degradation of CCN2. Plays a role in keratinocyte migration during wound healing. May play a role in cell migration and in tumor cell invasion. This chain is Collagenase 3 (MMP13), found in Equus caballus (Horse).